The following is a 441-amino-acid chain: Inositol hexakisphosphate kinase 1 (441 aa).

A disordered region spans residues 100–175; sequence ETVEQDDTTE…MLDGNSGLSS (76 aa). Residues 113 to 123 show a composition bias toward basic residues; that stretch reads PRRKHSRRSLH. Residues 137–149 are compositionally biased toward low complexity; it reads SLSLETSESSQEA. Residues 150–160 are compositionally biased toward basic and acidic residues; sequence KSPKVELHSHS. Phosphoserine is present on serine 151. Position 220 to 228 (220 to 228) interacts with substrate; it reads PCVLDLKMG. Residues 370 to 392 are disordered; sequence SSCGPSTSPSNTSPEAGPSSQPK. Polar residues predominate over residues 372 to 391; sequence CGPSTSPSNTSPEAGPSSQP.

It belongs to the inositol phosphokinase (IPK) family.

The protein localises to the cytoplasm. It is found in the nucleus. It carries out the reaction 1D-myo-inositol hexakisphosphate + ATP = 5-diphospho-1D-myo-inositol 1,2,3,4,6-pentakisphosphate + ADP. It catalyses the reaction 1-diphospho-1D-myo-inositol 2,3,4,5,6-pentakisphosphate + ATP + H(+) = 1,5-bis(diphospho)-1D-myo-inositol 2,3,4,6-tetrakisphosphate + ADP. In terms of biological role, converts inositol hexakisphosphate (InsP6) to diphosphoinositol pentakisphosphate (InsP7/PP-InsP5). Converts 1,3,4,5,6-pentakisphosphate (InsP5) to PP-InsP4. This chain is Inositol hexakisphosphate kinase 1 (IP6K1), found in Homo sapiens (Human).